The sequence spans 295 residues: MNIQDMILTLQKHWSSQGCVLMQAYDVEKGAGTMSPYTFLRSIGPEPWKVAYVEPSRRPADGRYGENPNRLYQHHQFQVIIKPSPDNIQELYLDSLRALGIDPLEHDIRFVEDNWENPSLGCAGLGWEVWLDGMEITQFTYFQQVGGLECKPVSVEITYGIERLASYIQDKENVFDLEWTSGFTVKDLFMMAEYEHSVYTFETSDVDMLFQLFSTYEKEAIKQMDNGLVHPAYDYVLKCSHTFNLLDAKGAISVTERTGYIARVRNLARKVAKTYYEEREKLGFPMLKGEGSSHE.

This sequence belongs to the class-II aminoacyl-tRNA synthetase family. In terms of assembly, tetramer of two alpha and two beta subunits.

It localises to the cytoplasm. The catalysed reaction is tRNA(Gly) + glycine + ATP = glycyl-tRNA(Gly) + AMP + diphosphate. This Bacillus subtilis (strain 168) protein is Glycine--tRNA ligase alpha subunit (glyQ).